A 248-amino-acid chain; its full sequence is Probable transcriptional regulatory protein RPD_4171 (248 aa).

Residues 1-22 (MAGHSQFKNIMHRKGKQDAQRS) are disordered.

Belongs to the TACO1 family.

Its subcellular location is the cytoplasm. This chain is Probable transcriptional regulatory protein RPD_4171, found in Rhodopseudomonas palustris (strain BisB5).